Here is a 222-residue protein sequence, read N- to C-terminus: Pleckstrin homology domain-containing family B member 2 (222 aa).

A PH domain is found at 2–109 (AFVKSGWLLR…WKFTLQDSRT (108 aa)). Lysine 20 lines the a 1,2-diacyl-sn-glycero-3-phospho-L-serine pocket.

Its subcellular location is the recycling endosome membrane. In terms of biological role, involved in retrograde transport of recycling endosomes. The chain is Pleckstrin homology domain-containing family B member 2 (PLEKHB2) from Pongo abelii (Sumatran orangutan).